We begin with the raw amino-acid sequence, 499 residues long: Glycerol kinase (499 aa).

Thr-15 is a binding site for ADP. The ATP site is built by Thr-15, Thr-16, and Ser-17. Residue Thr-15 coordinates sn-glycerol 3-phosphate. Arg-19 provides a ligand contact to ADP. Residues Arg-85, Glu-86, Tyr-137, and Asp-246 each contribute to the sn-glycerol 3-phosphate site. Arg-85, Glu-86, Tyr-137, Asp-246, and Gln-247 together coordinate glycerol. Thr-268 and Gly-311 together coordinate ADP. ATP contacts are provided by Thr-268, Gly-311, Gln-315, and Gly-412. Residues Gly-412 and Asn-416 each coordinate ADP.

Belongs to the FGGY kinase family.

The catalysed reaction is glycerol + ATP = sn-glycerol 3-phosphate + ADP + H(+). It participates in polyol metabolism; glycerol degradation via glycerol kinase pathway; sn-glycerol 3-phosphate from glycerol: step 1/1. With respect to regulation, inhibited by fructose 1,6-bisphosphate (FBP). Its function is as follows. Key enzyme in the regulation of glycerol uptake and metabolism. Catalyzes the phosphorylation of glycerol to yield sn-glycerol 3-phosphate. The polypeptide is Glycerol kinase (Parabacteroides distasonis (strain ATCC 8503 / DSM 20701 / CIP 104284 / JCM 5825 / NCTC 11152)).